A 520-amino-acid polypeptide reads, in one-letter code: UDP-N-acetylmuramoyl-L-alanyl-D-glutamate--2,6-diaminopimelate ligase (520 aa).

A UDP-N-acetyl-alpha-D-muramoyl-L-alanyl-D-glutamate-binding site is contributed by Leu48. Gly134 to Thr140 is a binding site for ATP. Residues Thr176–Thr177, Ser203, and Arg211 contribute to the UDP-N-acetyl-alpha-D-muramoyl-L-alanyl-D-glutamate site. Lys243 carries the N6-carboxylysine modification. Residues Arg405, Asp429 to Arg432, Gly483, and Glu487 contribute to the meso-2,6-diaminopimelate site. The Meso-diaminopimelate recognition motif signature appears at Asp429–Arg432.

This sequence belongs to the MurCDEF family. MurE subfamily. The cofactor is Mg(2+). In terms of processing, carboxylation is probably crucial for Mg(2+) binding and, consequently, for the gamma-phosphate positioning of ATP.

The protein resides in the cytoplasm. The enzyme catalyses UDP-N-acetyl-alpha-D-muramoyl-L-alanyl-D-glutamate + meso-2,6-diaminopimelate + ATP = UDP-N-acetyl-alpha-D-muramoyl-L-alanyl-gamma-D-glutamyl-meso-2,6-diaminopimelate + ADP + phosphate + H(+). It participates in cell wall biogenesis; peptidoglycan biosynthesis. In terms of biological role, catalyzes the addition of meso-diaminopimelic acid to the nucleotide precursor UDP-N-acetylmuramoyl-L-alanyl-D-glutamate (UMAG) in the biosynthesis of bacterial cell-wall peptidoglycan. The polypeptide is UDP-N-acetylmuramoyl-L-alanyl-D-glutamate--2,6-diaminopimelate ligase (Mycobacterium avium (strain 104)).